An 89-amino-acid polypeptide reads, in one-letter code: Long neurotoxin homolog TA-bm16 (89 aa).

Positions 1-21 (MKTLLLTLVVVTIVCLDLGYT) are cleaved as a signal peptide. Disulfide bonds link C24–C45, C27–C32, C38–C66, C70–C81, and C82–C87.

The protein belongs to the three-finger toxin family. Ancestral subfamily. Orphan group V sub-subfamily. As to expression, expressed by the venom gland.

The protein resides in the secreted. Exhibits M2 muscarinic acetylcholine receptor (CHRM2)-blocking activity, but has a weak binding activity toward nicotinic AChR. Moreover, it inhibits collagen-induced platelet aggregation. This Bungarus multicinctus (Many-banded krait) protein is Long neurotoxin homolog TA-bm16.